Reading from the N-terminus, the 392-residue chain is Stilbene synthase 4 (392 aa).

Residue 55–58 coordinates substrate; sequence KFNR. Residue C164 is part of the active site. Residues L267 and 305–307 each bind substrate; that span reads GGP.

It belongs to the thiolase-like superfamily. Chalcone/stilbene synthases family. As to quaternary structure, homodimer.

The protein localises to the cytoplasm. The catalysed reaction is 4-coumaroyl-CoA + 3 malonyl-CoA + 3 H(+) = trans-resveratrol + 4 CO2 + 4 CoA. It functions in the pathway phytoalexin biosynthesis; 3,4',5-trihydroxystilbene biosynthesis; 3,4',5-trihydroxystilbene from trans-4-coumarate: step 2/2. Mediates resistance to pathogens which are sensitive to stilbenes. In Vitis vinifera (Grape), this protein is Stilbene synthase 4.